Here is a 102-residue protein sequence, read N- to C-terminus: Pyrimidine/purine nucleoside phosphorylase (102 aa).

This sequence belongs to the nucleoside phosphorylase PpnP family.

The catalysed reaction is a purine D-ribonucleoside + phosphate = a purine nucleobase + alpha-D-ribose 1-phosphate. It catalyses the reaction adenosine + phosphate = alpha-D-ribose 1-phosphate + adenine. It carries out the reaction cytidine + phosphate = cytosine + alpha-D-ribose 1-phosphate. The enzyme catalyses guanosine + phosphate = alpha-D-ribose 1-phosphate + guanine. The catalysed reaction is inosine + phosphate = alpha-D-ribose 1-phosphate + hypoxanthine. It catalyses the reaction thymidine + phosphate = 2-deoxy-alpha-D-ribose 1-phosphate + thymine. It carries out the reaction uridine + phosphate = alpha-D-ribose 1-phosphate + uracil. The enzyme catalyses xanthosine + phosphate = alpha-D-ribose 1-phosphate + xanthine. Functionally, catalyzes the phosphorolysis of diverse nucleosides, yielding D-ribose 1-phosphate and the respective free bases. Can use uridine, adenosine, guanosine, cytidine, thymidine, inosine and xanthosine as substrates. Also catalyzes the reverse reactions. This is Pyrimidine/purine nucleoside phosphorylase from Shewanella amazonensis (strain ATCC BAA-1098 / SB2B).